The chain runs to 171 residues: 3-hydroxydecanoyl-[acyl-carrier-protein] dehydratase (171 aa).

H70 is an active-site residue.

Belongs to the thioester dehydratase family. FabA subfamily. In terms of assembly, homodimer.

The protein resides in the cytoplasm. It catalyses the reaction a (3R)-hydroxyacyl-[ACP] = a (2E)-enoyl-[ACP] + H2O. The catalysed reaction is (3R)-hydroxydecanoyl-[ACP] = (2E)-decenoyl-[ACP] + H2O. The enzyme catalyses (2E)-decenoyl-[ACP] = (3Z)-decenoyl-[ACP]. Its pathway is lipid metabolism; fatty acid biosynthesis. Necessary for the introduction of cis unsaturation into fatty acids. Catalyzes the dehydration of (3R)-3-hydroxydecanoyl-ACP to E-(2)-decenoyl-ACP and then its isomerization to Z-(3)-decenoyl-ACP. Can catalyze the dehydratase reaction for beta-hydroxyacyl-ACPs with saturated chain lengths up to 16:0, being most active on intermediate chain length. The chain is 3-hydroxydecanoyl-[acyl-carrier-protein] dehydratase from Mesorhizobium japonicum (strain LMG 29417 / CECT 9101 / MAFF 303099) (Mesorhizobium loti (strain MAFF 303099)).